The following is a 1151-amino-acid chain: Error-prone DNA polymerase (1151 aa).

Residues 1108–1151 are disordered; sequence HPVPSGDALIEPLNDDRRDHADAPAQKIRHPRNVRILPPSRDFH.

The protein belongs to the DNA polymerase type-C family. DnaE2 subfamily.

It is found in the cytoplasm. The catalysed reaction is DNA(n) + a 2'-deoxyribonucleoside 5'-triphosphate = DNA(n+1) + diphosphate. DNA polymerase involved in damage-induced mutagenesis and translesion synthesis (TLS). It is not the major replicative DNA polymerase. This is Error-prone DNA polymerase from Bradyrhizobium diazoefficiens (strain JCM 10833 / BCRC 13528 / IAM 13628 / NBRC 14792 / USDA 110).